The chain runs to 210 residues: Thymidylate kinase (210 aa).

ATP is bound at residue 10-17; it reads GLEGAGKS.

The protein belongs to the thymidylate kinase family.

The enzyme catalyses dTMP + ATP = dTDP + ADP. Phosphorylation of dTMP to form dTDP in both de novo and salvage pathways of dTTP synthesis. This Haemophilus influenzae (strain PittEE) protein is Thymidylate kinase.